The following is a 460-amino-acid chain: MTNYAIILAAGKGTRMTSDLPKVLHKVSGLTMLEHVFRSVKAISPEKAVTVIGHKSEKVRAVLADQSAFVHQTEQLGTGHAVMMAETQLEGLEGHTLVIAGDTPLITGESLKSLIDFHVNHKNVATILTATAQDPFGYGRIVRNKDGEVIKIVEQKDANEYEQQLKEINTGTYVFDNKRLFEALKCITTNNAQGEYYLTDVVAIFRANKEKVGAYILRDFNESLGVNDRVALATAETVMRQRITQKHMVNGVTFQNPETVYIESDVEIAPDVLIEGNVTLKGRTHIGSGTVLTNGTYIVDSEIGQGSIITNSMIESSVLAAGVTVGPYAHLRPGTTLDREVHIGNFVEVKGSHIGEKTKAGHLTYIGNAQVGSSVNVGAGTITVNYDGQNKYETVIGDHAFIGSNSTLIAPLEVGDNALTAAGSTISKTVPADSIVIGRSRQVTKEGYAKRLAHHPSRSK.

Residues 1-229 are pyrophosphorylase; it reads MTNYAIILAA…FNESLGVNDR (229 aa). UDP-N-acetyl-alpha-D-glucosamine is bound by residues 8-11, Lys22, Gln72, and 77-78; these read LAAG and GT. Residue Asp102 coordinates Mg(2+). UDP-N-acetyl-alpha-D-glucosamine is bound by residues Gly139, Glu154, Asn169, and Asn227. Position 227 (Asn227) interacts with Mg(2+). Residues 230–250 form a linker region; it reads VALATAETVMRQRITQKHMVN. Positions 251 to 460 are N-acetyltransferase; that stretch reads GVTFQNPETV…RLAHHPSRSK (210 aa). Positions 332 and 350 each coordinate UDP-N-acetyl-alpha-D-glucosamine. The Proton acceptor role is filled by His362. The UDP-N-acetyl-alpha-D-glucosamine site is built by Tyr365 and Asn376. Acetyl-CoA is bound by residues Ala379, 385 to 386, Ser404, Ala422, and Arg439; that span reads NY.

In the N-terminal section; belongs to the N-acetylglucosamine-1-phosphate uridyltransferase family. This sequence in the C-terminal section; belongs to the transferase hexapeptide repeat family. Homotrimer. Mg(2+) is required as a cofactor.

It localises to the cytoplasm. The catalysed reaction is alpha-D-glucosamine 1-phosphate + acetyl-CoA = N-acetyl-alpha-D-glucosamine 1-phosphate + CoA + H(+). It catalyses the reaction N-acetyl-alpha-D-glucosamine 1-phosphate + UTP + H(+) = UDP-N-acetyl-alpha-D-glucosamine + diphosphate. Its pathway is nucleotide-sugar biosynthesis; UDP-N-acetyl-alpha-D-glucosamine biosynthesis; N-acetyl-alpha-D-glucosamine 1-phosphate from alpha-D-glucosamine 6-phosphate (route II): step 2/2. It participates in nucleotide-sugar biosynthesis; UDP-N-acetyl-alpha-D-glucosamine biosynthesis; UDP-N-acetyl-alpha-D-glucosamine from N-acetyl-alpha-D-glucosamine 1-phosphate: step 1/1. It functions in the pathway bacterial outer membrane biogenesis; LPS lipid A biosynthesis. Its function is as follows. Catalyzes the last two sequential reactions in the de novo biosynthetic pathway for UDP-N-acetylglucosamine (UDP-GlcNAc). The C-terminal domain catalyzes the transfer of acetyl group from acetyl coenzyme A to glucosamine-1-phosphate (GlcN-1-P) to produce N-acetylglucosamine-1-phosphate (GlcNAc-1-P), which is converted into UDP-GlcNAc by the transfer of uridine 5-monophosphate (from uridine 5-triphosphate), a reaction catalyzed by the N-terminal domain. This is Bifunctional protein GlmU from Streptococcus pyogenes serotype M5 (strain Manfredo).